Reading from the N-terminus, the 439-residue chain is Methionine aminopeptidase 2-2 (439 aa).

The disordered stretch occupies residues 1–90 (MAAQTTEKLD…RVPVSNLFPN (90 aa)). Acidic residues predominate over residues 28-41 (EAEEDSDDAQDEGA). The segment covering 56–72 (KKKKKKKPKKKSKKKGG) has biased composition (basic residues). H196 is a substrate binding site. Residues D216, D227, and H296 each coordinate a divalent metal cation. Substrate is bound at residue H304. A divalent metal cation-binding residues include E329 and E424.

It belongs to the peptidase M24A family. Methionine aminopeptidase eukaryotic type 2 subfamily. The cofactor is Co(2+). Requires Zn(2+) as cofactor. Mn(2+) serves as cofactor. Fe(2+) is required as a cofactor.

The protein resides in the cytoplasm. The enzyme catalyses Release of N-terminal amino acids, preferentially methionine, from peptides and arylamides.. Its function is as follows. Cotranslationally removes the N-terminal methionine from nascent proteins. The N-terminal methionine is often cleaved when the second residue in the primary sequence is small and uncharged (Met-Ala-, Cys, Gly, Pro, Ser, Thr, or Val). This chain is Methionine aminopeptidase 2-2, found in Penicillium rubens (strain ATCC 28089 / DSM 1075 / NRRL 1951 / Wisconsin 54-1255) (Penicillium chrysogenum).